We begin with the raw amino-acid sequence, 131 residues long: Large-conductance mechanosensitive channel (131 aa).

3 helical membrane-spanning segments follow: residues 8-28, 30-50, and 67-87; these read FAVR…GAFG, IVSS…LGGI, and GAFL…FLFV.

It belongs to the MscL family. As to quaternary structure, homopentamer.

It localises to the cell membrane. Its function is as follows. Channel that opens in response to stretch forces in the membrane lipid bilayer. May participate in the regulation of osmotic pressure changes within the cell. In Anoxybacillus flavithermus (strain DSM 21510 / WK1), this protein is Large-conductance mechanosensitive channel.